The sequence spans 101 residues: MNKSMIILCAVLFLTYIIEENEALKVEDLPEPESYKRAKELAVKDAKGDKKAEGVAFQILKDNRKDCMTNCKLVPTCHLLSPECCPKQTPVCLQLDVVKSG.

Positions 1 to 23 (MNKSMIILCAVLFLTYIIEENEA) are cleaved as a signal peptide.

It belongs to the scoloptoxin-10 family. Post-translationally, contains 3 disulfide bonds. Expressed by the venom gland.

It localises to the secreted. This chain is U-scoloptoxin(10)-Sm2a, found in Scolopendra morsitans (Tanzanian blue ringleg centipede).